The chain runs to 268 residues: MAVVTLKQLLEAGVHFGHQTRRWNPKMKPFIYAERNGIYIIDLQKTYEQLEAAYSFVRDASKEGKTVLFVGTKRQAQEPIREEAERAGMPYVNQRWIGGFLTNFRTIRTRIKKYKELLALREQGYIESLDYKEQKRVMRELEKLDKYYSGVKDMDTLPDILFVVDTKKEEAAIREAKKIGIPVVAMIDTNCDPDLVDYPIPANDDAVRAIKLITSKIADAILEGREGRQGIVSSEGQQASMEEIAEELEAIDETEKYLDLIDEEKEEE.

This sequence belongs to the universal ribosomal protein uS2 family.

This Coprothermobacter proteolyticus (strain ATCC 35245 / DSM 5265 / OCM 4 / BT) protein is Small ribosomal subunit protein uS2.